We begin with the raw amino-acid sequence, 396 residues long: Elongation factor Tu (396 aa).

The tr-type G domain occupies 10-205 (KPHVNIGTIG…ACDESIPDPV (196 aa)). The segment at 19-26 (GHVDHGKT) is G1. Residue 19–26 (GHVDHGKT) participates in GTP binding. Residue Thr26 coordinates Mg(2+). A G2 region spans residues 62–66 (GITIN). The interval 83 to 86 (DAPG) is G3. GTP is bound by residues 83–87 (DAPGH) and 138–141 (NKCD). Residues 138–141 (NKCD) are G4. The tract at residues 175-177 (SAL) is G5.

Belongs to the TRAFAC class translation factor GTPase superfamily. Classic translation factor GTPase family. EF-Tu/EF-1A subfamily. As to quaternary structure, monomer.

It is found in the cytoplasm. The catalysed reaction is GTP + H2O = GDP + phosphate + H(+). GTP hydrolase that promotes the GTP-dependent binding of aminoacyl-tRNA to the A-site of ribosomes during protein biosynthesis. This is Elongation factor Tu from Corynebacterium kroppenstedtii (strain DSM 44385 / JCM 11950 / CIP 105744 / CCUG 35717).